The following is a 248-amino-acid chain: L-seryl-tRNA(Sec) kinase (248 aa).

ATP is bound at residue 7 to 14 (GLPGVGKS).

It belongs to the L-seryl-tRNA(Sec) kinase family.

The enzyme catalyses L-seryl-tRNA(Sec) + ATP = O-phospho-L-seryl-tRNA(Sec) + ADP. It participates in aminoacyl-tRNA biosynthesis; selenocysteinyl-tRNA(Sec) biosynthesis; selenocysteinyl-tRNA(Sec) from L-seryl-tRNA(Sec) (archaeal/eukaryal route): step 1/2. Specifically phosphorylates seryl-tRNA(Sec) to O-phosphoseryl-tRNA(Sec), an activated intermediate for selenocysteine biosynthesis. In Methanocaldococcus jannaschii (strain ATCC 43067 / DSM 2661 / JAL-1 / JCM 10045 / NBRC 100440) (Methanococcus jannaschii), this protein is L-seryl-tRNA(Sec) kinase (pstK).